The following is a 154-amino-acid chain: Telokin (154 aa).

The tract at residues 1 to 24 is disordered; it reads ISGMSGRKASGSSPTSPINANKVE. Residues 10-19 show a composition bias toward polar residues; it reads SGSSPTSPIN. Positions 42-133 constitute an Ig-like C2-type domain; the sequence is PYFTKTILDM…ATCTAELLVE (92 aa). A disordered region spans residues 134–154; the sequence is TMGKEGEGEGEGEEDEEEEEE. Residues 141-154 are compositionally biased toward acidic residues; the sequence is GEGEGEEDEEEEEE.

It belongs to the protein kinase superfamily. CAMK Ser/Thr protein kinase family. Binds calmodulin.

Corresponds to the C-terminus of smooth muscle myosin light chain kinase. The chain is Telokin from Meleagris gallopavo (Wild turkey).